Reading from the N-terminus, the 391-residue chain is NAD(P)H-quinone oxidoreductase subunit H, chloroplastic (391 aa).

It belongs to the complex I 49 kDa subunit family. NDH is composed of at least 16 different subunits, 5 of which are encoded in the nucleus.

Its subcellular location is the plastid. The protein resides in the chloroplast thylakoid membrane. It carries out the reaction a plastoquinone + NADH + (n+1) H(+)(in) = a plastoquinol + NAD(+) + n H(+)(out). The enzyme catalyses a plastoquinone + NADPH + (n+1) H(+)(in) = a plastoquinol + NADP(+) + n H(+)(out). Functionally, NDH shuttles electrons from NAD(P)H:plastoquinone, via FMN and iron-sulfur (Fe-S) centers, to quinones in the photosynthetic chain and possibly in a chloroplast respiratory chain. The immediate electron acceptor for the enzyme in this species is believed to be plastoquinone. Couples the redox reaction to proton translocation, and thus conserves the redox energy in a proton gradient. The protein is NAD(P)H-quinone oxidoreductase subunit H, chloroplastic of Physcomitrium patens (Spreading-leaved earth moss).